An 85-amino-acid chain; its full sequence is Putative membrane protein insertion efficiency factor (85 aa).

The protein belongs to the UPF0161 family.

Its subcellular location is the cell membrane. Could be involved in insertion of integral membrane proteins into the membrane. This is Putative membrane protein insertion efficiency factor from Buchnera aphidicola subsp. Schizaphis graminum (strain Sg).